A 296-amino-acid chain; its full sequence is Enoyl-CoA hydratase domain-containing protein 2, mitochondrial (296 aa).

An N6-acetyllysine; alternate modification is found at Lys-101. Position 101 is an N6-succinyllysine; alternate (Lys-101).

Belongs to the enoyl-CoA hydratase/isomerase family.

It localises to the mitochondrion. The chain is Enoyl-CoA hydratase domain-containing protein 2, mitochondrial (ECHDC2) from Bos taurus (Bovine).